Here is a 340-residue protein sequence, read N- to C-terminus: tRNA N6-adenosine threonylcarbamoyltransferase (340 aa).

Residues H111 and H115 each coordinate Fe cation. Substrate is bound by residues 134–138 (IISGA), D167, G180, and N273. D301 serves as a coordination point for Fe cation.

The protein belongs to the KAE1 / TsaD family. Requires Fe(2+) as cofactor.

It is found in the cytoplasm. It catalyses the reaction L-threonylcarbamoyladenylate + adenosine(37) in tRNA = N(6)-L-threonylcarbamoyladenosine(37) in tRNA + AMP + H(+). Required for the formation of a threonylcarbamoyl group on adenosine at position 37 (t(6)A37) in tRNAs that read codons beginning with adenine. Is involved in the transfer of the threonylcarbamoyl moiety of threonylcarbamoyl-AMP (TC-AMP) to the N6 group of A37, together with TsaE and TsaB. TsaD likely plays a direct catalytic role in this reaction. In Wigglesworthia glossinidia brevipalpis, this protein is tRNA N6-adenosine threonylcarbamoyltransferase.